A 79-amino-acid polypeptide reads, in one-letter code: Cyclin-dependent kinases regulatory subunit 2 (79 aa).

Lys-4 is modified (N6-acetyllysine).

The protein belongs to the CKS family. In terms of assembly, forms a homohexamer that can probably bind six kinase subunits.

Its function is as follows. Binds to the catalytic subunit of the cyclin dependent kinases and is essential for their biological function. In Mus musculus (Mouse), this protein is Cyclin-dependent kinases regulatory subunit 2 (Cks2).